The following is a 258-amino-acid chain: Type III pantothenate kinase 1 (258 aa).

6–13 (DMGNSHIH) serves as a coordination point for ATP. 107 to 110 (GADR) contacts substrate. The active-site Proton acceptor is Asp109. Asp130 provides a ligand contact to K(+). Thr133 is a binding site for ATP. Residue Thr185 participates in substrate binding.

Belongs to the type III pantothenate kinase family. As to quaternary structure, homodimer. It depends on NH4(+) as a cofactor. The cofactor is K(+).

It localises to the cytoplasm. The enzyme catalyses (R)-pantothenate + ATP = (R)-4'-phosphopantothenate + ADP + H(+). Its pathway is cofactor biosynthesis; coenzyme A biosynthesis; CoA from (R)-pantothenate: step 1/5. Functionally, catalyzes the phosphorylation of pantothenate (Pan), the first step in CoA biosynthesis. This chain is Type III pantothenate kinase 1, found in Francisella tularensis subsp. tularensis (strain FSC 198).